The primary structure comprises 146 residues: Deoxyuridine 5'-triphosphate nucleotidohydrolase (146 aa).

Substrate contacts are provided by residues 65 to 67 (RSG), asparagine 78, 82 to 84 (LID), and methionine 92.

Belongs to the dUTPase family. The cofactor is Mg(2+).

The enzyme catalyses dUTP + H2O = dUMP + diphosphate + H(+). The protein operates within pyrimidine metabolism; dUMP biosynthesis; dUMP from dCTP (dUTP route): step 2/2. Its function is as follows. This enzyme is involved in nucleotide metabolism: it produces dUMP, the immediate precursor of thymidine nucleotides and it decreases the intracellular concentration of dUTP so that uracil cannot be incorporated into DNA. The chain is Deoxyuridine 5'-triphosphate nucleotidohydrolase from Thiobacillus denitrificans (strain ATCC 25259 / T1).